A 267-amino-acid chain; its full sequence is Short-chain dehydrogenase/reductase GME11361 (267 aa).

Residues isoleucine 10, threonine 36, lysine 42, aspartate 57, asparagine 80, tyrosine 129, lysine 133, valine 162, and serine 164 each contribute to the NADP(+) site. Tyrosine 129 serves as the catalytic Proton acceptor. Lysine 133 (lowers pKa of active site Tyr) is an active-site residue.

It belongs to the short-chain dehydrogenases/reductases (SDR) family.

The protein operates within secondary metabolite biosynthesis. Its function is as follows. Short-chain dehydrogenase/reductase; part of the gene cluster that mediates the biosynthesis of dibenzodioxocinones such as pestalotiollide B, a novel class of inhibitors against cholesterol ester transfer protein (CEPT). The biosynthesis initiates from condensation of acetate and malonate units catalyzed by the non-reducing PKS pks8/GME11356. Pks8/GME11356 lacks a thioesterase (TE) domain, which is important to the cyclizing of the third ring of atrochrysone carboxylic acid, and the esterase GME11355 might play the role of TE and catalyzes the cyclization reaction of the C ring. The lactamase-like protein GME11357 (or other beta-lactamases in Pestalotiopsis microspora) probably hydrolyzes the thioester bond between the ACP of pks8/GME11356 and the intermediate to release atrochrysone carboxylic acid, which is spontaneously dehydrates to form endocrocin anthrone. Endocrocin anthrone is further converted to emodin via the endocrocin intermediate. Emodin is then oxidized by several enzymes such as the Baeyer-Villiger oxidase GME11358, the oxidoreductase GME11367, the short chain dehydrogenase/reductase GME11373, as well as by other oxidoreductases from the cluster, to modify the A and C rings and open the B ring, and finally yield monodictyphenone. The prenyltransferase GME11375 may catalyze the addition reaction between the C5 side chains and the carbon bone of dibenzodioxocinones. The remaining biochemical reactions to the final product dibenzodioxocinones should be methylation catalyzed by methyltransferase GME11366 and reduction and lactonization reaction catalyzed by a series of oxidordeuctases. In Pestalotiopsis microspora, this protein is Short-chain dehydrogenase/reductase GME11361.